We begin with the raw amino-acid sequence, 312 residues long: Acetyl-coenzyme A carboxylase carboxyl transferase subunit alpha (312 aa).

The 251-residue stretch at E36–A286 folds into the CoA carboxyltransferase C-terminal domain.

This sequence belongs to the AccA family. In terms of assembly, acetyl-CoA carboxylase is a heterohexamer composed of biotin carboxyl carrier protein (AccB), biotin carboxylase (AccC) and two subunits each of ACCase subunit alpha (AccA) and ACCase subunit beta (AccD).

The protein localises to the cytoplasm. The enzyme catalyses N(6)-carboxybiotinyl-L-lysyl-[protein] + acetyl-CoA = N(6)-biotinyl-L-lysyl-[protein] + malonyl-CoA. Its pathway is lipid metabolism; malonyl-CoA biosynthesis; malonyl-CoA from acetyl-CoA: step 1/1. Functionally, component of the acetyl coenzyme A carboxylase (ACC) complex. First, biotin carboxylase catalyzes the carboxylation of biotin on its carrier protein (BCCP) and then the CO(2) group is transferred by the carboxyltransferase to acetyl-CoA to form malonyl-CoA. The polypeptide is Acetyl-coenzyme A carboxylase carboxyl transferase subunit alpha (Sulfurovum sp. (strain NBC37-1)).